Reading from the N-terminus, the 246-residue chain is 3-oxoacyl-[acyl-carrier-protein] reductase FabG (246 aa).

NADP(+) contacts are provided by residues 62–63 (NV) and Asn-89. Position 141 (Ser-141) interacts with substrate. Residue Tyr-154 is the Proton acceptor of the active site. Residues 154 to 158 (YAASK) and Ile-187 contribute to the NADP(+) site.

It belongs to the short-chain dehydrogenases/reductases (SDR) family. As to quaternary structure, homotetramer.

It carries out the reaction a (3R)-hydroxyacyl-[ACP] + NADP(+) = a 3-oxoacyl-[ACP] + NADPH + H(+). It participates in lipid metabolism; fatty acid biosynthesis. In terms of biological role, catalyzes the NADPH-dependent reduction of beta-ketoacyl-ACP substrates to beta-hydroxyacyl-ACP products, the first reductive step in the elongation cycle of fatty acid biosynthesis. The chain is 3-oxoacyl-[acyl-carrier-protein] reductase FabG (fabG) from Thermotoga maritima (strain ATCC 43589 / DSM 3109 / JCM 10099 / NBRC 100826 / MSB8).